The following is a 231-amino-acid chain: Probable glutathione S-transferase (231 aa).

Residues 4 to 96 enclose the GST N-terminal domain; the sequence is PNFELYGYFR…YLEEALPTNA (93 aa). Residues serine 14, glutamine 43, valine 57, 80-81, glutamine 124, and 128-130 contribute to the glutathione site; these read QS and NLK. In terms of domain architecture, GST C-terminal spans 105–227; it reads NPVARAHVRT…HWQKQEDTPE (123 aa).

This sequence belongs to the GST superfamily. Zeta family. As to quaternary structure, homodimer.

The catalysed reaction is RX + glutathione = an S-substituted glutathione + a halide anion + H(+). Functionally, probable glutathione S-transferase. The protein is Probable glutathione S-transferase of Coccidioides immitis (strain RS) (Valley fever fungus).